Consider the following 177-residue polypeptide: B9 domain-containing protein 2 (177 aa).

In terms of domain architecture, C2 B9-type spans 2-118 (AEVHIIGQIL…EIGTWKVAPN (117 aa)).

This sequence belongs to the B9D family. Probable component of the tectonic-like complex (also named MKS complex), composed of B9d1, B9d2, Cc2d2a, Mks1 and tctn. Expressed in chordotonal neurons in the antennae (at protein level). Expressed in spermatids (at protein level).

It localises to the cytoplasm. Its subcellular location is the cytoskeleton. The protein resides in the cilium basal body. Probable component of the tectonic-like complex (also named MKS complex), a complex localized at the transition zone of primary cilia. Has a role in ciliary structure and function. This chain is B9 domain-containing protein 2, found in Drosophila melanogaster (Fruit fly).